Consider the following 318-residue polypeptide: Mediator of RNA polymerase II transcription subunit 30 (318 aa).

Residues 1-13 show a composition bias toward low complexity; the sequence is MWKYGQNQGNQGP. Disordered regions lie at residues 1–92 and 120–142; these read MWKY…QQQQ and GGGVVPQQQQQQPQQNMPQQNIP. The segment covering 14-33 has biased composition (gly residues); the sequence is SSGGGGGGGPNMMPMGGFGM. 3 stretches are compositionally biased toward low complexity: residues 34–55, 78–92, and 124–142; these read QHGNMQQMHMSPQHQQQQQQMG, PGMSPQHQMQQQQQQ, and VPQQQQQQPQQNMPQQNIP.

This sequence belongs to the Mediator complex subunit 30 family. Component of the Mediator complex, which includes at least CDK8, MED4, MED6, MED11, MED14, MED17, MED18, MED20, MED21, MED22, MED27, MED28, MED30 and MED31.

The protein resides in the nucleus. Component of the Mediator complex, a coactivator involved in the regulated transcription of nearly all RNA polymerase II-dependent genes. Mediator functions as a bridge to convey information from gene-specific regulatory proteins to the basal RNA polymerase II transcription machinery. Mediator is recruited to promoters by direct interactions with regulatory proteins and serves as a scaffold for the assembly of a functional preinitiation complex with RNA polymerase II and the general transcription factors. The polypeptide is Mediator of RNA polymerase II transcription subunit 30 (MED30) (Drosophila melanogaster (Fruit fly)).